Here is a 286-residue protein sequence, read N- to C-terminus: Phosphate import ATP-binding protein PstB (286 aa).

One can recognise an ABC transporter domain in the interval V40–I281. G72 to S79 provides a ligand contact to ATP.

Belongs to the ABC transporter superfamily. Phosphate importer (TC 3.A.1.7) family. The complex is composed of two ATP-binding proteins (PstB), two transmembrane proteins (PstC and PstA) and a solute-binding protein (PstS).

It is found in the cell inner membrane. The catalysed reaction is phosphate(out) + ATP + H2O = ADP + 2 phosphate(in) + H(+). In terms of biological role, part of the ABC transporter complex PstSACB involved in phosphate import. Responsible for energy coupling to the transport system. The protein is Phosphate import ATP-binding protein PstB of Chlorobaculum tepidum (strain ATCC 49652 / DSM 12025 / NBRC 103806 / TLS) (Chlorobium tepidum).